The primary structure comprises 400 residues: MTDSLFPRLVLAKGREKSLLRRHPWIFSGGVARMEGKARSGETIDIVDHQGKWLARGAYSPSSQIRARVWTFDRNEAIDSAFFERRLQQAQTWRAWLAERDGLDSYRLIAGESDGLPGVTIDRFGNFFVLQLLSAGAEYQRAAIISALQNLFPDCAIYDRSDVAVRKKEGLELAQGPVVGELPPALLPITEHGMKLLVDIQGGHKTGYYLDQRDSRLATRRYVADKRVLNCFSYTGGFAVSALMGGCRQVTSVDTSQEALDVARQNVEINGLDLSKAEFVRDDVFKLLRKYRDQGEKFDVIVMDPPKFVENKSQLMGACRGYKDINMLAIQLLNPGGVLLTFSCSGLMTTDLFQKIIADAAIDAGRDVQFIEQFRQAADHPVIATYPEGLYLKGFACRVM.

Positions 6-84 (FPRLVLAKGR…NEAIDSAFFE (79 aa)) constitute a PUA domain.

It belongs to the methyltransferase superfamily. RlmI family.

It localises to the cytoplasm. The enzyme catalyses cytidine(1962) in 23S rRNA + S-adenosyl-L-methionine = 5-methylcytidine(1962) in 23S rRNA + S-adenosyl-L-homocysteine + H(+). Functionally, specifically methylates the cytosine at position 1962 (m5C1962) of 23S rRNA. This Klebsiella pneumoniae subsp. pneumoniae (strain ATCC 700721 / MGH 78578) protein is Ribosomal RNA large subunit methyltransferase I.